The chain runs to 621 residues: Alpha-actinin-like protein 1 (621 aa).

2 Calponin-homology (CH) domains span residues 8–114 and 123–230; these read SVQN…LRFT and LTAK…HAFS. Residues 86-110 form an actin-binding region; sequence LTNIGPADIVDGNLKLILGLIWTLI. EF-hand domains follow at residues 388-419, 487-549, and 550-618; these read LSTISNEITNLQGDWRDQLDHVEFLQEHLGPL, DGIT…EIVM, and EELE…AEDK.

It belongs to the alpha-actinin family.

The protein resides in the cytoplasm. It localises to the cytoskeleton. In terms of biological role, binds to actin and is involved in actin-ring formation and organization. Plays a role in cytokinesis and is involved in septation. The protein is Alpha-actinin-like protein 1 (ain1) of Schizosaccharomyces pombe (strain 972 / ATCC 24843) (Fission yeast).